Here is a 510-residue protein sequence, read N- to C-terminus: Beta-glucosidase 26 (510 aa).

The first 27 residues, 1–27 (MRKFIAALRLALAAAAHLLLTLPPAQC), serve as a signal peptide directing secretion. Residue Q59 coordinates a beta-D-glucoside. 2 N-linked (GlcNAc...) asparagine glycosylation sites follow: N87 and N127. Residues H160 and 205–206 (NE) contribute to the a beta-D-glucoside site. The Proton donor role is filled by E206. C225 and C228 are oxidised to a cystine. N-linked (GlcNAc...) asparagine glycosylation is present at N233. Positions 345 and 416 each coordinate a beta-D-glucoside. E416 (nucleophile) is an active-site residue. The N-linked (GlcNAc...) asparagine glycan is linked to N424. A beta-D-glucoside-binding positions include W463, 470–471 (EW), and F479.

It belongs to the glycosyl hydrolase 1 family.

It carries out the reaction Hydrolysis of terminal, non-reducing beta-D-glucosyl residues with release of beta-D-glucose.. Hydrolyzes p-nitrophenyl beta-D-glucoside, p-nitrophenyl beta-D-mannoside, p-nitrophenyl beta-D-galactoside, p-nitrophenyl beta-D-xyloside, p-nitrophenyl beta-D-fucoside, p-nitrophenyl beta-L-arabinoside, cello-oligosaccharides, laminari-oligosaccharides and sophorose. The sequence is that of Beta-glucosidase 26 (BGLU26) from Oryza sativa subsp. japonica (Rice).